A 198-amino-acid polypeptide reads, in one-letter code: Endoribonuclease YbeY (198 aa).

Positions 156, 160, and 166 each coordinate Zn(2+).

This sequence belongs to the endoribonuclease YbeY family. Requires Zn(2+) as cofactor.

It is found in the cytoplasm. In terms of biological role, single strand-specific metallo-endoribonuclease involved in late-stage 70S ribosome quality control and in maturation of the 3' terminus of the 16S rRNA. The polypeptide is Endoribonuclease YbeY (Cupriavidus necator (strain ATCC 17699 / DSM 428 / KCTC 22496 / NCIMB 10442 / H16 / Stanier 337) (Ralstonia eutropha)).